The primary structure comprises 551 residues: PA-phosphatase related-family protein DDB_G0268928 (551 aa).

Polar residues-rich tracts occupy residues 26-47 (TESL…SGKD) and 137-152 (KYNT…SSNK). 2 disordered regions span residues 26 to 50 (TESL…DYSS) and 123 to 172 (KGED…NNNN). Positions 153–171 (TQTTVLNNSTTSSNNINNN) are enriched in low complexity. 7 helical membrane passes run 211–231 (SYSD…SIIY), 232–252 (SLLV…LVFI), 273–293 (LAVG…AVVL), 346–366 (ILQL…IYIL), 393–413 (MFIC…LIFP), 474–494 (ILPA…IATM), and 500–520 (YFVD…YGGF).

Belongs to the PA-phosphatase related phosphoesterase family.

It is found in the membrane. This is PA-phosphatase related-family protein DDB_G0268928 from Dictyostelium discoideum (Social amoeba).